Consider the following 73-residue polypeptide: Cell division protein ZapB (73 aa).

A coiled-coil region spans residues Leu-3–Val-66.

The protein belongs to the ZapB family. In terms of assembly, homodimer. The ends of the coiled-coil dimer bind to each other, forming polymers. Interacts with FtsZ.

The protein localises to the cytoplasm. Non-essential, abundant cell division factor that is required for proper Z-ring formation. It is recruited early to the divisome by direct interaction with FtsZ, stimulating Z-ring assembly and thereby promoting cell division earlier in the cell cycle. Its recruitment to the Z-ring requires functional FtsA or ZipA. This chain is Cell division protein ZapB, found in Shewanella frigidimarina (strain NCIMB 400).